The following is a 129-amino-acid chain: Small ribosomal subunit protein uS11 (129 aa).

Belongs to the universal ribosomal protein uS11 family. Part of the 30S ribosomal subunit. Interacts with proteins S7 and S18. Binds to IF-3.

Functionally, located on the platform of the 30S subunit, it bridges several disparate RNA helices of the 16S rRNA. Forms part of the Shine-Dalgarno cleft in the 70S ribosome. The protein is Small ribosomal subunit protein uS11 of Maricaulis maris (strain MCS10) (Caulobacter maris).